Here is a 1669-residue protein sequence, read N- to C-terminus: Collagen alpha-1(IV) chain (1669 aa).

A signal peptide spans 1 to 27 (MGPRLSVWLLLLPAALLLHEEHSRAAA). The propeptide at 28-172 (KGGCAGSGCG…LGHVPGMLLK (145 aa)) is N-terminal propeptide (7S domain). Disordered stretches follow at residues 48–459 (KGER…EIGE), 504–1382 (GRDG…PKGQ), and 1404–1431 (PGQK…DGLP). Asn126 carries N-linked (GlcNAc...) asparagine glycosylation. The tract at residues 173 to 1440 (GERGFPGIPG…PGSMGPPGTP (1268 aa)) is triple-helical region. Positions 196-214 (VGPPGFTGPPGPPGPPGPP) are enriched in pro residues. Pro204, Pro207, and Pro210 each carry 3-hydroxyproline. Residues 234–249 (QGVSGPPGVPGQAQVQ) show a composition bias toward low complexity. Basic and acidic residues-rich tracts occupy residues 250-263 (EKGD…KGQK) and 289-298 (PGKDGDKGEK). 3 stretches are compositionally biased toward pro residues: residues 367-376 (PGQPGPPGLP), 413-424 (PGPPGSPGPPGQ), and 436-448 (PGPP…PGIP). Residues 535-545 (FDLRLKGDKGD) show a composition bias toward basic and acidic residues. Over residues 586-595 (GPPGGVGFPG) the composition is skewed to gly residues. Pro587 and Pro602 each carry 3-hydroxyproline. The residue at position 603 (Pro603) is a 4-hydroxyproline. Pro605 bears the 3-hydroxyproline mark. The residue at position 606 (Pro606) is a 4-hydroxyproline. A compositionally biased stretch (low complexity) spans 611–620 (AGPIGDKGQA). The span at 621-630 (GFPGGPGSPG) shows a compositional bias: gly residues. 4-hydroxyproline occurs at positions 623, 626, 629, and 632. Pro647 bears the 3-hydroxyproline mark. Over residues 797-817 (GVPGIGPPGARGPPGGQGPPG) the composition is skewed to gly residues. Composition is skewed to low complexity over residues 856 to 875 (QSGL…PGFP) and 977 to 986 (PGKDGQAGQP). Gly residues predominate over residues 1011 to 1020 (GSVGGMGLPG). The span at 1086 to 1114 (SIGIPGMPGSPGLKGSPGSVGYPGSPGLP) shows a compositional bias: low complexity. 3-hydroxyproline is present on Pro1214. Positions 1247–1258 (PGLPGPMGPPGL) are enriched in pro residues. Over residues 1290-1299 (GMPGIGGSPG) the composition is skewed to gly residues. A compositionally biased stretch (low complexity) spans 1368–1382 (PGLKGLQGLPGPKGQ). Residue Pro1424 is modified to 3-hydroxyproline. Residues 1445 to 1669 (GFLVTRHSQT…SRCQVCMRRT (225 aa)) form the Collagen IV NC1 domain. Disulfide bonds link Cys1460–Cys1551, Cys1493–Cys1548, Cys1505–Cys1511, Cys1570–Cys1665, Cys1604–Cys1662, and Cys1616–Cys1622. An S-Lysyl-methionine sulfilimine (Met-Lys) (interchain with K-1651) cross-link involves residue Met1533. Lys1651 is covalently cross-linked (S-Lysyl-methionine sulfilimine (Lys-Met) (interchain with M-1533)).

The protein belongs to the type IV collagen family. In terms of assembly, there are six type IV collagen isoforms, alpha 1(IV)-alpha 6(IV), each of which can form a triple helix structure with 2 other chains to generate type IV collagen network. Interacts with EFEMP2. Post-translationally, lysines at the third position of the tripeptide repeating unit (G-X-Y) are hydroxylated. The modified lysines can be O-glycosylated. In terms of processing, contains 4-hydroxyproline. Prolines at the third position of the tripeptide repeating unit (G-X-Y) are hydroxylated in some or all of the chains. Contains 3-hydroxyproline. This modification occurs on the first proline residue in the sequence motif Gly-Pro-Hyp, where Hyp is 4-hydroxyproline. Post-translationally, type IV collagens contain numerous cysteine residues which are involved in inter- and intramolecular disulfide bonding. 12 of these, located in the NC1 domain, are conserved in all known type IV collagens. In terms of processing, the trimeric structure of the NC1 domains is stabilized by covalent bonds (sulfilimine cross-links) between Lys and Met residues. These cross-links are important for the mechanical stability of the basement membrane. Sulfilimine cross-link is catalyzed by PXDN. Proteolytic processing produces the C-terminal NC1 peptide, arresten. As to expression, highly expressed in placenta.

Its subcellular location is the secreted. It localises to the extracellular space. The protein resides in the extracellular matrix. The protein localises to the basement membrane. Type IV collagen is the major structural component of glomerular basement membranes (GBM), forming a 'chicken-wire' meshwork together with laminins, proteoglycans and entactin/nidogen. In terms of biological role, arresten, comprising the C-terminal NC1 domain, inhibits angiogenesis and tumor formation. The C-terminal half is found to possess the anti-angiogenic activity. Specifically inhibits endothelial cell proliferation, migration and tube formation. This Homo sapiens (Human) protein is Collagen alpha-1(IV) chain.